The chain runs to 873 residues: MASFIWVQLKKTSEVDLAKPLVKFIQQTYPSGGEEQAQYCRAAEELSKLRRSALGRPLDKHEGALETLLRYYDQICSIEPKFPFSENQICLTFTWKDAFDKGSLFGGSVKLALASLGYEKSCVLFNCAALASQIAAEQNLDNDEGLKTAAKQYQFASGAFLHIKDTVLSALSREPTVDISPDTVGTLSLIMLAQAQEVFFLKATRDKMKDAIIAKLANQAADYFGDAFKQCQYKDALPKYFYFQEVFPTLAAKQCIMQANAEYHQSILAKQQKKFGEEIARLQHAAELIKNVASRYDEYVNVKDFSDKINRALAAAKKDNDFIYHDRVPDLKDLDPIGKATLVKPTPVNVPISQKFTDLFEKMVPVSVQQSLAVFSQRKADLVNRSIAQMREATTLANGVLASLNLPAAIEDVSGDTVPQSILTKSTAVVEQGGIQTVDQLIKELPELLQRNREILEESLRLLDEEEATDNDLRAKFKDRWQRTPSNDLYKPLRAEGAKFRAVLDKAVQADGQVKERYQSHRDTIALLCKPEPELNAAIPSANPAKTMQGSEVVNVLKSLLSNLDEIKKEREGLENDLKSVNFDMTSKFLTALAQDGVINEEALSVTELDRIYGGLTTKVQESLKKQEGLLKNIQVSHQEFSKMKQSNSEASLREEVLKNLATAYDNFVELVANLKEGTKFYNELTEILVRFQNKCSDIVFARKTERDELLKDLQQSIAREPSAPSIPPPAYQSSPAGGHATAPTPAPRTMPPAKPQPPARPPPPVLPANRVPPAAAATAPAGVGTASAAPPQTPGSAPPPQAQGPPYPTYPGYPGYCQMPMPMGYNPYTYGQYNMPYPPVYHQSPGQAPYPGPQQPTYPFPQPPQQSYYPQQ.

Ala-2 carries the N-acetylalanine modification. One can recognise a BRO1 domain in the interval 3–397; sequence SFIWVQLKKT…AQMREATTLA (395 aa). Residues 176–508 form an interaction with CHMP4A, CHMP4B and CHMP4C region; it reads TVDISPDTVG…KFRAVLDKAV (333 aa). Lys-215 is modified (N6-acetyllysine). The interval 423–873 is interaction with SDCBP; the sequence is LTKSTAVVEQ…PPQQSYYPQQ (451 aa). Thr-484 is modified (phosphothreonine). Position 486 is a phosphoserine (Ser-486). A self-association region spans residues 508-873; sequence VQADGQVKER…PPQQSYYPQQ (366 aa). 2 disordered regions span residues 719 to 808 and 837 to 873; these read AREP…GPPY and PYPP…YPQQ. Residues 722-725 are interaction with TSG101; the sequence is PSAP. Position 735 is a phosphoserine (Ser-735). Residues Thr-742 and Thr-745 each carry the phosphothreonine modification. The span at 745-767 shows a compositional bias: pro residues; the sequence is TPAPRTMPPAKPQPPARPPPPVL. Arg-749 is subject to Omega-N-methylarginine. Positions 768–791 are enriched in low complexity; that stretch reads PANRVPPAAAATAPAGVGTASAAP. 2 stretches are compositionally biased toward pro residues: residues 792–808 and 849–865; these read PQTP…GPPY and APYP…PQPP. Residues 802–811 form an interaction with CEP55 region; the sequence is QAQGPPYPTY.

In terms of assembly, self-associates. Interacts with SH3KBP1. Interacts with PDCD6 in a calcium-dependent manner. Interacts with TSG101 in a calcium-dependent manner; PDCD6IP homooligomerization may be required for TSG101-binding. Interacts with SGSM3. Directly interacts with CHMP4A, CHMP4B and CHMP4C. Directly interacts with CEP55 in a 1:2 stoechiometry; this interaction is required for PDCD6IP targeting to the midbody. May interact with PDGFRB. Interacts with SH3GL1 and SH3GL2/endophilin-1. Forms a complex with SDCBP and SDC2. Found in a complex with F-actin, TJP1/ZO-1 and PARD3. Interacts with CD2AP. Interacts with ARRDC1. Interacts (via BRO1 domain) with the ATG12-ATG3 conjugate; this interaction is bridged by ATG12 and promotes multiple PDCD6IP-mediated functions such as endolysosomal trafficking, macroautophagy and exosome biogenesis. Post-translationally, may be phosphorylated on tyrosine residues by activated PDGFRB. Expressed in astrocytes and glioma cells.

Its subcellular location is the cytoplasm. The protein localises to the cytosol. The protein resides in the melanosome. It localises to the cytoskeleton. It is found in the microtubule organizing center. Its subcellular location is the centrosome. The protein localises to the secreted. The protein resides in the extracellular exosome. It localises to the cell junction. It is found in the tight junction. Its subcellular location is the midbody. The protein localises to the midbody ring. Its function is as follows. Multifunctional protein involved in endocytosis, multivesicular body biogenesis, membrane repair, cytokinesis, apoptosis and maintenance of tight junction integrity. Class E VPS protein involved in concentration and sorting of cargo proteins of the multivesicular body (MVB) for incorporation into intralumenal vesicles (ILVs) that are generated by invagination and scission from the limiting membrane of the endosome. Binds to the phospholipid lysobisphosphatidic acid (LBPA) which is abundant in MVBs internal membranes. The MVB pathway requires the sequential function of ESCRT-O, -I,-II and -III complexes. The ESCRT machinery also functions in topologically equivalent membrane fission events, such as the terminal stages of cytokinesis. Adapter for a subset of ESCRT-III proteins, such as CHMP4, to function at distinct membranes. Required for completion of cytokinesis. May play a role in the regulation of both apoptosis and cell proliferation. Regulates exosome biogenesis in concert with SDC1/4 and SDCBP. By interacting with F-actin, PARD3 and TJP1 secures the proper assembly and positioning of actomyosin-tight junction complex at the apical sides of adjacent epithelial cells that defines a spatial membrane domain essential for the maintenance of epithelial cell polarity and barrier. The protein is Programmed cell death 6-interacting protein of Rattus norvegicus (Rat).